An 835-amino-acid chain; its full sequence is Toll-like receptor 4 (835 aa).

The first 25 residues, 1 to 25, serve as a signal peptide directing secretion; sequence MMPLLHLAGTLIMALFLSCLRPGSL. At 26-638 the chain is on the extracellular side; sequence NPCIEVLPNI…KTIISVSVVS (613 aa). Residues cysteine 28 and cysteine 39 are joined by a disulfide bond. N-linked (GlcNAc...) asparagine glycosylation is found at asparagine 34, asparagine 43, and asparagine 75. LRR repeat units follow at residues 54–75, 78–99, 102–123, 126–147, and 150–171; these read STKN…SFTN, QLQW…AWHG, QLST…SFSG, NLEN…HIGQ, and SLKK…EYFS. Asparagine 172 is a glycosylation site (N-linked (GlcNAc...) asparagine). LRR repeat units follow at residues 175–198, 204–224, and 226–247; these read NLEH…QFLR, NLSL…AFQG, and RLHE…MCLQ. N-linked (GlcNAc...) asparagine glycosylation is found at asparagine 204, asparagine 237, asparagine 248, asparagine 281, and asparagine 307. Cysteines 280 and 304 form a disulfide. The stretch at 372–381 is one LRR 9 repeat; that stretch reads SLRYLDLSRN. A disulfide bridge links cysteine 388 with cysteine 389. 4 LRR repeats span residues 398–420, 421–442, 446–467, and 470–491; these read NLKY…MGLE, ELEY…SVFL, KLLY…IFLG, and SLNT…NVFT. 3 N-linked (GlcNAc...) asparagine glycosylation sites follow: asparagine 492, asparagine 495, and asparagine 524. 3 LRR repeats span residues 495–516, 519–540, and 543–564; these read NLTF…VFDT, RLQL…HYKQ, and SLRT…LQHF. Asparagine 572 and asparagine 575 each carry an N-linked (GlcNAc...) asparagine glycan. An LRRCT domain is found at 576–627; the sequence is NSVACICEYQNFLQWVKDQKMFLVNVEQMKCASPIDMKASLVLDFTNSTCYI. 2 disulfides stabilise this stretch: cysteine 580–cysteine 606 and cysteine 582–cysteine 625. N-linked (GlcNAc...) asparagine glycosylation is present at asparagine 622. Residues 639–659 form a helical membrane-spanning segment; the sequence is VLVVATVAFLIYHFYFHLILI. At 660–835 the chain is on the cytoplasmic side; sequence AGCKKYSRGE…EEEQEATTLT (176 aa). Residues 670–813 form the TIR domain; that stretch reads SIYDAFVIYS…IFWRRLKKAL (144 aa).

Belongs to the Toll-like receptor family. In terms of assembly, belongs to the lipopolysaccharide (LPS) receptor, a multi-protein complex containing at least CD14, LY96 and TLR4. Binding to bacterial LPS leads to homodimerization. Interacts with LY96 via the extracellular domain. Interacts with MYD88 and TIRAP via their respective TIR domains. Interacts with TICAM2. Interacts with NOX4. Interacts with CNPY3 and HSP90B1; this interaction is required for proper folding in the endoplasmic reticulum. Interacts with MAP3K21; this interaction leads to negative regulation of TLR4 signaling. Interacts with CD36, following CD36 stimulation by oxLDL or amyloid-beta 42, and forms a heterodimer with TLR6. The trimeric complex is internalized and triggers inflammatory response. LYN kinase activity facilitates TLR4-TLR6 heterodimerization and signal initiation. Interacts with TICAM1 in response to LPS in a WDFY1-dependent manner. Interacts with WDFY1 in response to LPS. Interacts with SMPDL3B. Interacts with CEACAM1; upon lipopolysaccharide stimulation, forms a complex including TLR4 and the phosphorylated form of SYK and CEACAM1, which in turn, recruits PTPN6 that dephosphorylates SYK, reducing the production of reactive oxygen species (ROS) and lysosome disruption, which in turn, reduces the activity of the inflammasome. Interacts with RFTN1; the interaction occurs in response to lipopolysaccharide stimulation. Interacts with SCIMP; the interaction occurs in response to lipopolysaccharide stimulation and is enhanced by phosphorylation of SCIMP by LYN. This interaction facilitates the phosphorylation of TLR4 by LYN which elicits a selective cytokine response in macrophages. Interacts with TRAF3IP3. Interacts with TREM1; this interaction enhances TLR4-mediated inflammatory response. Interacts with ZG16B/PAUF. Interacts with CD82; this interaction inhibits TLR4-mediated signaling pathway. Post-translationally, phosphorylated on tyrosine residues by LYN after binding lipopolysaccharide. In terms of processing, ubiquitinated by RNF128 via 'Lys-28'-linked polyubiquitin chains, leading to proteasomal degradation.

It localises to the cell membrane. Its subcellular location is the early endosome. The protein localises to the cell projection. The protein resides in the ruffle. Transmembrane receptor that functions as a pattern recognition receptor recognizing pathogen- and damage-associated molecular patterns (PAMPs and DAMPs) to induce innate immune responses via downstream signaling pathways. At the plasma membrane, cooperates with LY96 to mediate the innate immune response to bacterial lipopolysaccharide (LPS). Also involved in LPS-independent inflammatory responses triggered by free fatty acids, such as palmitate, and Ni(2+). Mechanistically, acts via MYD88, TIRAP and TRAF6, leading to NF-kappa-B activation, cytokine secretion and the inflammatory response. Alternatively, CD14-mediated TLR4 internalization via endocytosis is associated with the initiation of a MYD88-independent signaling via the TICAM1-TBK1-IRF3 axis leading to type I interferon production. In addition to the secretion of proinflammatory cytokines, initiates the activation of NLRP3 inflammasome and formation of a positive feedback loop between autophagy and NF-kappa-B signaling cascade. In complex with TLR6, promotes inflammation in monocytes/macrophages by associating with TLR6 and the receptor CD86. Upon ligand binding, such as oxLDL or amyloid-beta 42, the TLR4:TLR6 complex is internalized and triggers inflammatory response, leading to NF-kappa-B-dependent production of CXCL1, CXCL2 and CCL9 cytokines, via MYD88 signaling pathway, and CCL5 cytokine, via TICAM1 signaling pathway. In myeloid dendritic cells, vesicular stomatitis virus glycoprotein G but not LPS promotes the activation of IRF7, leading to type I IFN production in a CD14-dependent manner. The polypeptide is Toll-like receptor 4 (Tlr4) (Rattus norvegicus (Rat)).